A 279-amino-acid chain; its full sequence is Digeranylgeranylglyceryl phosphate synthase (279 aa).

A run of 8 helical transmembrane segments spans residues Gly-5–Ala-25, Leu-27–Val-47, Phe-90–Val-110, Phe-127–Tyr-147, Ala-148–Leu-168, Lys-198–Tyr-218, Leu-219–Ala-239, and Thr-259–Leu-279.

The protein belongs to the UbiA prenyltransferase family. DGGGP synthase subfamily. The cofactor is Mg(2+).

Its subcellular location is the cell membrane. It catalyses the reaction sn-3-O-(geranylgeranyl)glycerol 1-phosphate + (2E,6E,10E)-geranylgeranyl diphosphate = 2,3-bis-O-(geranylgeranyl)-sn-glycerol 1-phosphate + diphosphate. It participates in membrane lipid metabolism; glycerophospholipid metabolism. In terms of biological role, prenyltransferase that catalyzes the transfer of the geranylgeranyl moiety of geranylgeranyl diphosphate (GGPP) to the C2 hydroxyl of (S)-3-O-geranylgeranylglyceryl phosphate (GGGP). This reaction is the second ether-bond-formation step in the biosynthesis of archaeal membrane lipids. The protein is Digeranylgeranylglyceryl phosphate synthase of Methanoregula boonei (strain DSM 21154 / JCM 14090 / 6A8).